A 553-amino-acid polypeptide reads, in one-letter code: Ergothioneine transport permease/ergothioneine binding protein EgtU (553 aa).

The region spanning 57 to 236 (LAQHFIIVAL…LFSVLADKFV (180 aa)) is the ABC transmembrane type-1 domain. Transmembrane regions (helical) follow at residues 61–81 (FIIV…IGVF), 98–118 (FLYT…IGVG), 122–142 (ALLV…YNAL), 182–202 (IAVV…AGGL), 219–239 (VAGS…VSVF), and 261–281 (VYTN…WLIP). Over 282–553 (RNAIEEKPLV…AKDFLERLGL (272 aa)) the chain is Periplasmic. Positions 288–549 (KPLVVATKPS…PKIVAKDFLE (262 aa)) are ergothioneine binding domain.

It in the N-terminal section; belongs to the binding-protein-dependent transport system permease family. In the C-terminal section; belongs to the OsmX family. As to quaternary structure, the complex is composed of two ATP-binding proteins (EgtV) and two transmembrane proteins (EgtU).

It localises to the cell inner membrane. In terms of biological role, part of the ABC transporter complex EgtUV involved in the uptake of ergothioneine (EGT), a natural low-molecular weight (LMW) thiol antioxidant which protects H.pylori against bleach stress. Responsible for the translocation of the substrate across the membrane. Also contains a C-terminal periplasmic solute-binding domain (SBD) which binds to ergothioneine with low-micromolar affinity. Cannot bind the structurally similar compounds glycine betaine, choline, proline, carnitine or histidine. This is Ergothioneine transport permease/ergothioneine binding protein EgtU from Helicobacter pylori (strain G27).